The chain runs to 199 residues: MSPEDWLQAEMQGEIVALVHSHPGGLPWLSEADRRLQVQSDLPWWLVCRGTIHKFRCVPHLTGRRFEHGVTDCYTLFRDAYHLAGIEMPDFHREDDWWRNGQNLYLDNLEATGLYQVPLSAAQPGDVLLCCFGSSVPNHAAIYCGDGELLHHIPEQLSKRERYTDKWQRRTHSLWRHRAWRASAFTGIYNDLVAASTFV.

The MPN domain maps to 1–77; sequence MSPEDWLQAE…HGVTDCYTLF (77 aa). Residues His20, His22, and Asp33 each coordinate Zn(2+). The short motif at 20-33 is the JAMM motif element; sequence HSHPGGLPWLSEAD. A NlpC/P60 domain is found at 40-186; sequence SDLPWWLVCR…HRAWRASAFT (147 aa). The Nucleophile role is filled by Cys73. His139 functions as the Proton acceptor in the catalytic mechanism. The active site involves His151.

Belongs to the peptidase C40 family.

It is found in the host cytoplasm. In terms of biological role, plays a role in tail tip complex assembly. The tail tip complex is assembled successively with three tail tip proteins J, one tail tip protein I, one tail tip protein L and one tail tip protein K. The tail tip complex interacts with tail measure protein to initiate tail tube assembly. The formation of the tail tip complex is completed by the addition of tail tip protein M, which is followed by tail tube polymerization. May be excluded form tail tip during maturation and would be absent from virions. May be involved in tail measure protein processing. This Escherichia phage lambda (Bacteriophage lambda) protein is Tail tip assembly protein K (K).